The following is a 525-amino-acid chain: GMP synthase [glutamine-hydrolyzing] (525 aa).

The Glutamine amidotransferase type-1 domain occupies 9–207 (RILILDFGSQ…VLQLCACEKL (199 aa)). Cys-86 acts as the Nucleophile in catalysis. Active-site residues include His-181 and Glu-183. In terms of domain architecture, GMPS ATP-PPase spans 208 to 400 (WTPANIVEDA…LGLPYDMVYR (193 aa)). An ATP-binding site is contributed by 235-241 (SGGVDSS).

As to quaternary structure, homodimer.

The enzyme catalyses XMP + L-glutamine + ATP + H2O = GMP + L-glutamate + AMP + diphosphate + 2 H(+). It participates in purine metabolism; GMP biosynthesis; GMP from XMP (L-Gln route): step 1/1. Catalyzes the synthesis of GMP from XMP. The chain is GMP synthase [glutamine-hydrolyzing] from Cellvibrio japonicus (strain Ueda107) (Pseudomonas fluorescens subsp. cellulosa).